A 192-amino-acid chain; its full sequence is Erythropoietin (192 aa).

Residues 1 to 27 form the signal peptide; the sequence is MGVHECPAWLWLLLSLVSLPLGLPVPG. 2 disulfides stabilise this stretch: cysteine 34/cysteine 187 and cysteine 56/cysteine 60. Residue asparagine 51 is glycosylated (N-linked (GlcNAc...) asparagine). N-linked (GlcNAc...) asparagine glycans are attached at residues asparagine 65 and asparagine 110. An O-linked (GalNAc...) serine glycan is attached at serine 152.

It belongs to the EPO/TPO family. As to expression, produced by kidney or liver of adult mammals and by liver of fetal or neonatal mammals.

It is found in the secreted. Its function is as follows. Hormone involved in the regulation of erythrocyte proliferation and differentiation and the maintenance of a physiological level of circulating erythrocyte mass. Binds to EPOR leading to EPOR dimerization and JAK2 activation thereby activating specific downstream effectors, including STAT1 and STAT3. This chain is Erythropoietin (EPO), found in Macaca fascicularis (Crab-eating macaque).